Reading from the N-terminus, the 206-residue chain is Guanylate kinase (206 aa).

A Guanylate kinase-like domain is found at 5 to 183 (GNLFVVAAPS…AVFDLKTIVH (179 aa)). 12–19 (APSGAGKS) is an ATP binding site.

The protein belongs to the guanylate kinase family.

It localises to the cytoplasm. It catalyses the reaction GMP + ATP = GDP + ADP. In terms of biological role, essential for recycling GMP and indirectly, cGMP. The protein is Guanylate kinase of Polaromonas sp. (strain JS666 / ATCC BAA-500).